Reading from the N-terminus, the 313-residue chain is MSKKVLITGGAGYIGSVLTPILLEKGYEVCVIDNLMFDQISLLSCFHNKNFTFINGDAMDENLIRQEVAKADIIIPLAALVGAPLCKRNPKLAKMINYEAVKMISDFASPSQIFIYPNTNSGYGIGEKDAMCTEESPLRPISEYGIDKVHAEQYLLDKGNCVTFRLATVFGISPRMRLDLLVNDFTYRAYRDKFIVLFEEHFRRNYIHVRDVVKGFIHGIENYDKMKGQAYNMGLSSANLTKRQLAETIKKYIPDFYIHSANIGEDPDKRDYLVSNTKLEATGWKPDNTLEDGIKELLRAFKMMKVNRFANFN.

Residues 13–14, 33–39, F37, 57–58, L77, and 144–148 contribute to the NADH site; these read YI, DNLMFDQ, DA, and YGIDK. A GDP-binding site is contributed by T168. NADH contacts are provided by residues V169 and 175-177; that span reads RMR. GDP-binding positions include 179 to 184, 196 to 198, R204, K242, and R270; these read DLLVND and VLF. Position 311 (N311) interacts with NADH.

Homotetramer. NAD(+) is required as a cofactor.

It catalyses the reaction GDP-D-glycero-alpha-D-manno-heptose + 2-oxoglutarate = GDP-D-glycero-4-keto-alpha-D-lyxo-heptose + (S)-2-hydroxyglutarate. It functions in the pathway capsule biogenesis; capsule polysaccharide biosynthesis. In terms of biological role, NAD-dependent dehydrogenase involved in the biosynthesis of heptose moieties with a hydroxyl group at C6 found on the capsular polysaccharide (CPS) of C.jejuni. Catalyzes the initial oxidation of C4 of the GDP-D-glycero-alpha-D-manno-heptose to form GDP-D-glycero-4-keto-alpha-D-lyxo-heptose in the presence of alpha-ketoglutarate required to recycle the NADH nucleotide. The polypeptide is GDP-D-glycero-alpha-D-manno-heptose dehydrogenase (Campylobacter jejuni subsp. jejuni serotype O:2 (strain ATCC 700819 / NCTC 11168)).